The following is a 376-amino-acid chain: Histidinol-phosphate aminotransferase (376 aa).

The disordered stretch occupies residues methionine 1–valine 21. Residue lysine 222 is modified to N6-(pyridoxal phosphate)lysine.

Belongs to the class-II pyridoxal-phosphate-dependent aminotransferase family. Histidinol-phosphate aminotransferase subfamily. Pyridoxal 5'-phosphate is required as a cofactor.

It carries out the reaction L-histidinol phosphate + 2-oxoglutarate = 3-(imidazol-4-yl)-2-oxopropyl phosphate + L-glutamate. It participates in amino-acid biosynthesis; L-histidine biosynthesis; L-histidine from 5-phospho-alpha-D-ribose 1-diphosphate: step 7/9. The polypeptide is Histidinol-phosphate aminotransferase (Haloquadratum walsbyi (strain DSM 16790 / HBSQ001)).